Consider the following 347-residue polypeptide: Globoside alpha-1,3-N-acetylgalactosaminyltransferase 1 (347 aa).

Residues Met1–Arg5 are Cytoplasmic-facing. The helical; Signal-anchor for type II membrane protein transmembrane segment at Leu6 to Tyr26 threads the bilayer. Over Met27–Ser347 the chain is Lumenal. The N-linked (GlcNAc...) asparagine glycan is linked to Asn108. Substrate-binding positions include Phe116–Tyr121, Asp206–Asp208, and His228–Tyr231. Mn(2+) contacts are provided by Asp206 and Asp208. The active-site Nucleophile is Glu298.

It belongs to the glycosyltransferase 6 family. Mn(2+) serves as cofactor.

The protein localises to the golgi apparatus membrane. The enzyme catalyses a globoside Gb4Cer (d18:1(4E)) + UDP-N-acetyl-alpha-D-galactosamine = a globoside Forssman (d18:1(4E)) + UDP + H(+). It carries out the reaction a globoside Gb4Cer + UDP-N-acetyl-alpha-D-galactosamine = a globoside IV3GalNAc-Gb4Cer + UDP + H(+). It participates in protein modification; protein glycosylation. Catalyzes the formation of Forssman glycolipid via the addition of N-acetylgalactosamine (GalNAc) in alpha-1,3-linkage to GalNAcb-1,3Gala-1,4Galb-1,4GlcCer (Gb4Cer). Forssman glycolipid (also called Forssman antigen; FG) probably serves for adherence of some pathogens such as E.coli uropathogenic strains. This Canis lupus familiaris (Dog) protein is Globoside alpha-1,3-N-acetylgalactosaminyltransferase 1.